The following is a 155-amino-acid chain: RNA pyrophosphohydrolase (155 aa).

Residues 5 to 147 form the Nudix hydrolase domain; sequence KYRPNVAAII…KRQVYRQVIA (143 aa). Residues 42–63 carry the Nudix box motif; that stretch reads GGIDEGETPLEALHRELLEEIG.

This sequence belongs to the Nudix hydrolase family. RppH subfamily. A divalent metal cation serves as cofactor.

Functionally, accelerates the degradation of transcripts by removing pyrophosphate from the 5'-end of triphosphorylated RNA, leading to a more labile monophosphorylated state that can stimulate subsequent ribonuclease cleavage. The sequence is that of RNA pyrophosphohydrolase from Helicobacter pylori (strain G27).